A 367-amino-acid polypeptide reads, in one-letter code: Glutamate 5-kinase (367 aa).

Lys-9 contributes to the ATP binding site. 3 residues coordinate substrate: Ser-49, Asp-136, and Asn-148. ATP-binding positions include 168-169 and 210-216; these read TD and TGGMKSK. A PUA domain is found at 276–350; the sequence is SGQIEIDAGA…GMQSQQIQAR (75 aa).

The protein belongs to the glutamate 5-kinase family.

Its subcellular location is the cytoplasm. The enzyme catalyses L-glutamate + ATP = L-glutamyl 5-phosphate + ADP. It functions in the pathway amino-acid biosynthesis; L-proline biosynthesis; L-glutamate 5-semialdehyde from L-glutamate: step 1/2. Functionally, catalyzes the transfer of a phosphate group to glutamate to form L-glutamate 5-phosphate. This is Glutamate 5-kinase from Bacillus anthracis.